The chain runs to 157 residues: Ribosome maturation factor RimP (157 aa).

This sequence belongs to the RimP family.

It localises to the cytoplasm. Its function is as follows. Required for maturation of 30S ribosomal subunits. The chain is Ribosome maturation factor RimP from Streptococcus thermophilus (strain ATCC BAA-491 / LMD-9).